An 80-amino-acid chain; its full sequence is Acyl carrier protein (80 aa).

The region spanning 4-79 is the Carrier domain; it reads DATLEKVRSI…DAVKYIEDKQ (76 aa). Ser39 is modified (O-(pantetheine 4'-phosphoryl)serine).

It belongs to the acyl carrier protein (ACP) family. In terms of processing, 4'-phosphopantetheine is transferred from CoA to a specific serine of apo-ACP by AcpS. This modification is essential for activity because fatty acids are bound in thioester linkage to the sulfhydryl of the prosthetic group.

It is found in the cytoplasm. It participates in lipid metabolism; fatty acid biosynthesis. Carrier of the growing fatty acid chain in fatty acid biosynthesis. This is Acyl carrier protein from Prochlorococcus marinus (strain MIT 9211).